The chain runs to 316 residues: Olfactory receptor 1N2 (316 aa).

Over 1-28 (MGKPGRVNQTTVSDFLLLGLSEWPEEQP) the chain is Extracellular. N-linked (GlcNAc...) asparagine glycosylation is present at Asn-8. Residues 29 to 49 (LLFGIFLGMYLVTMVGNLLII) traverse the membrane as a helical segment. At 50-60 (LAISSDPHLHT) the chain is on the cytoplasmic side. Residues 61–81 (PMYFFLANLSLTDACFTSASI) form a helical membrane-spanning segment. The Extracellular portion of the chain corresponds to 82–100 (PKMLANIHTQSQIISYSGC). Cys-100 and Cys-182 are joined by a disulfide. A helical membrane pass occupies residues 101–121 (LAQLYFLLMFGGLDNCLLAVM). Residues 122–145 (AYDRYVAICQPLHYSTSMSPQLCA) lie on the Cytoplasmic side of the membrane. A helical transmembrane segment spans residues 146 to 166 (LMLGVCWVLTNCPALMHTLLL). The Extracellular portion of the chain corresponds to 167–199 (TRVAFCAQKAIPHFYCDPSALLKLACSDTHVNE). A helical transmembrane segment spans residues 200–220 (LMIITMGLLFLTVPLLLIVFS). At 221–243 (YVRIFWAVFVISSPGGRWKAFST) the chain is on the cytoplasmic side. Residues 244 to 264 (CGSHLTVVLLFYGSLMGVYLL) traverse the membrane as a helical segment. The Extracellular segment spans residues 265 to 274 (PPSTYSTERE). The helical transmembrane segment at 275 to 295 (SRAAVLYMVIIPTLNPFIYSL) threads the bilayer. Over 296–316 (RNRDMKEALGKLFVSGKTFFL) the chain is Cytoplasmic.

This sequence belongs to the G-protein coupled receptor 1 family.

Its subcellular location is the membrane. Odorant receptor. The protein is Olfactory receptor 1N2 (OR1N2) of Homo sapiens (Human).